We begin with the raw amino-acid sequence, 117 residues long: UPF0321 protein PJ695.01c (117 aa).

Positions 1–17 are cleaved as a signal peptide; sequence MLLLLYICCLFLKFILA. Asn-39, Asn-65, Asn-71, and Asn-104 each carry an N-linked (GlcNAc...) asparagine glycan.

This sequence belongs to the UPF0321 family.

This is UPF0321 protein PJ695.01c from Schizosaccharomyces pombe (strain 972 / ATCC 24843) (Fission yeast).